A 152-amino-acid chain; its full sequence is Small ribosomal subunit protein bS6 (152 aa).

The disordered stretch occupies residues 94–152; that stretch reads VKQEGPLPTPKPSNKSSTQSENKDNPETKVESKEEQSVTNSDTSTTKKDDNEIKENTES. Basic and acidic residues-rich tracts occupy residues 114–129 and 138–152; these read ENKD…KEEQ and TTKK…NTES.

Belongs to the bacterial ribosomal protein bS6 family.

In terms of biological role, binds together with bS18 to 16S ribosomal RNA. The polypeptide is Small ribosomal subunit protein bS6 (Prochlorococcus marinus (strain MIT 9312)).